Reading from the N-terminus, the 579-residue chain is Arginine--tRNA ligase (579 aa).

The 'HIGH' region signature appears at 127-137; sequence PNLAKEMHVGH.

The protein belongs to the class-I aminoacyl-tRNA synthetase family. As to quaternary structure, monomer.

It is found in the cytoplasm. It carries out the reaction tRNA(Arg) + L-arginine + ATP = L-arginyl-tRNA(Arg) + AMP + diphosphate. In Azotobacter vinelandii (strain DJ / ATCC BAA-1303), this protein is Arginine--tRNA ligase.